Here is a 262-residue protein sequence, read N- to C-terminus: Ribosomal RNA small subunit methyltransferase A (262 aa).

Positions 16, 18, 43, 64, 89, and 109 each coordinate S-adenosyl-L-methionine.

It belongs to the class I-like SAM-binding methyltransferase superfamily. rRNA adenine N(6)-methyltransferase family. RsmA subfamily.

It is found in the cytoplasm. The enzyme catalyses adenosine(1518)/adenosine(1519) in 16S rRNA + 4 S-adenosyl-L-methionine = N(6)-dimethyladenosine(1518)/N(6)-dimethyladenosine(1519) in 16S rRNA + 4 S-adenosyl-L-homocysteine + 4 H(+). In terms of biological role, specifically dimethylates two adjacent adenosines (A1518 and A1519) in the loop of a conserved hairpin near the 3'-end of 16S rRNA in the 30S particle. May play a critical role in biogenesis of 30S subunits. This chain is Ribosomal RNA small subunit methyltransferase A, found in Xanthomonas oryzae pv. oryzae (strain MAFF 311018).